A 477-amino-acid polypeptide reads, in one-letter code: Aspartyl/glutamyl-tRNA(Asn/Gln) amidotransferase subunit B (477 aa).

It belongs to the GatB/GatE family. GatB subfamily. In terms of assembly, heterotrimer of A, B and C subunits.

The catalysed reaction is L-glutamyl-tRNA(Gln) + L-glutamine + ATP + H2O = L-glutaminyl-tRNA(Gln) + L-glutamate + ADP + phosphate + H(+). The enzyme catalyses L-aspartyl-tRNA(Asn) + L-glutamine + ATP + H2O = L-asparaginyl-tRNA(Asn) + L-glutamate + ADP + phosphate + 2 H(+). In terms of biological role, allows the formation of correctly charged Asn-tRNA(Asn) or Gln-tRNA(Gln) through the transamidation of misacylated Asp-tRNA(Asn) or Glu-tRNA(Gln) in organisms which lack either or both of asparaginyl-tRNA or glutaminyl-tRNA synthetases. The reaction takes place in the presence of glutamine and ATP through an activated phospho-Asp-tRNA(Asn) or phospho-Glu-tRNA(Gln). This is Aspartyl/glutamyl-tRNA(Asn/Gln) amidotransferase subunit B from Legionella pneumophila subsp. pneumophila (strain Philadelphia 1 / ATCC 33152 / DSM 7513).